Here is a 101-residue protein sequence, read N- to C-terminus: Protein Tat (101 aa).

The segment at 1 to 24 (MEPVDPNLEPWKHPGSQPRTACTN) is interaction with human CREBBP. Positions 1–48 (MEPVDPNLEPWKHPGSQPRTACTNCYCKKCCFHCQVCFITKGLGISYG) are transactivation. Residues C22, C25, and C27 each contribute to the Zn(2+) site. The interval 22–37 (CTNCYCKKCCFHCQVC) is cysteine-rich. K28 is modified (N6-acetyllysine; by host PCAF). The Zn(2+) site is built by C30, H33, C34, and C37. Residues 38-48 (FITKGLGISYG) form a core region. The interval 48–101 (GRKKRRQRQRAPDSSQNHQDSLSKQPSSQPRGDPTGPKESKKEVERETETDPLD) is disordered. Residues 49-57 (RKKRRQRQR) carry the Nuclear localization signal, RNA-binding (TAR), and protein transduction motif. Residues 49–86 (RKKRRQRQRAPDSSQNHQDSLSKQPSSQPRGDPTGPKE) are interaction with the host capping enzyme RNGTT. N6-acetyllysine; by host EP300 and GCN5L2 is present on residues K50 and K51. An asymmetric dimethylarginine; by host PRMT6 mark is found at R52 and R53. The span at 59 to 77 (PDSSQNHQDSLSKQPSSQP) shows a compositional bias: polar residues. A Glycyl lysine isopeptide (Lys-Gly) (interchain with G-Cter in ubiquitin) cross-link involves residue K71. The Cell attachment site motif lies at 78-80 (RGD). The segment covering 83–101 (GPKESKKEVERETETDPLD) has biased composition (basic and acidic residues).

This sequence belongs to the lentiviruses Tat family. Interacts with host CCNT1. Associates with the P-TEFb complex composed at least of Tat, P-TEFb (CDK9 and CCNT1), TAR RNA, RNA Pol II. Recruits the HATs CREBBP, TAF1/TFIID, EP300, PCAF and GCN5L2. Interacts with host KAT5/Tip60; this interaction targets the latter to degradation. Interacts with the host deacetylase SIRT1. Interacts with host capping enzyme RNGTT; this interaction stimulates RNGTT. Binds to host KDR, and to the host integrins ITGAV/ITGB3 and ITGA5/ITGB1. Interacts with host KPNB1/importin beta-1 without previous binding to KPNA1/importin alpha-1. Interacts with EIF2AK2. Interacts with host nucleosome assembly protein NAP1L1; this interaction may be required for the transport of Tat within the nucleus, since the two proteins interact at the nuclear rim. Interacts with host C1QBP/SF2P32; this interaction involves lysine-acetylated Tat. Interacts with the host chemokine receptors CCR2, CCR3 and CXCR4. Interacts with host DPP4/CD26; this interaction may trigger an anti-proliferative effect. Interacts with host LDLR. Interacts with the host extracellular matrix metalloproteinase MMP1. Interacts with host PRMT6; this interaction mediates Tat's methylation. Interacts with, and is ubiquitinated by MDM2/Hdm2. Interacts with host PSMC3 and HTATIP2. Interacts with STAB1; this interaction may overcome SATB1-mediated repression of IL2 and IL2RA (interleukin) in T cells by binding to the same domain than HDAC1. Interacts (when acetylated) with human CDK13, thereby increasing HIV-1 mRNA splicing and promoting the production of the doubly spliced HIV-1 protein Nef. Interacts with host TBP; this interaction modulates the activity of transcriptional pre-initiation complex. Interacts with host RELA. Interacts with host PLSCR1; this interaction negatively regulates Tat transactivation activity by altering its subcellular distribution. In terms of processing, asymmetrical arginine methylation by host PRMT6 seems to diminish the transactivation capacity of Tat and affects the interaction with host CCNT1. Post-translationally, acetylation by EP300, CREBBP, GCN5L2/GCN5 and PCAF regulates the transactivation activity of Tat. EP300-mediated acetylation of Lys-50 promotes dissociation of Tat from the TAR RNA through the competitive binding to PCAF's bromodomain. In addition, the non-acetylated Tat's N-terminus can also interact with PCAF. PCAF-mediated acetylation of Lys-28 enhances Tat's binding to CCNT1. Lys-50 is deacetylated by SIRT1. Polyubiquitination by host MDM2 does not target Tat to degradation, but activates its transactivation function and fosters interaction with CCNT1 and TAR RNA. In terms of processing, phosphorylated by EIF2AK2 on serine and threonine residues adjacent to the basic region important for TAR RNA binding and function. Phosphorylation of Tat by EIF2AK2 is dependent on the prior activation of EIF2AK2 by dsRNA.

It is found in the host nucleus. It localises to the host nucleolus. Its subcellular location is the host cytoplasm. The protein resides in the secreted. Transcriptional activator that increases RNA Pol II processivity, thereby increasing the level of full-length viral transcripts. Recognizes a hairpin structure at the 5'-LTR of the nascent viral mRNAs referred to as the transactivation responsive RNA element (TAR) and recruits the cyclin T1-CDK9 complex (P-TEFb complex) that will in turn hyperphosphorylate the RNA polymerase II to allow efficient elongation. The CDK9 component of P-TEFb and other Tat-activated kinases hyperphosphorylate the C-terminus of RNA Pol II that becomes stabilized and much more processive. Other factors such as HTATSF1/Tat-SF1, SUPT5H/SPT5, and HTATIP2 are also important for Tat's function. Besides its effect on RNA Pol II processivity, Tat induces chromatin remodeling of proviral genes by recruiting the histone acetyltransferases (HATs) CREBBP, EP300 and PCAF to the chromatin. This also contributes to the increase in proviral transcription rate, especially when the provirus integrates in transcriptionally silent region of the host genome. To ensure maximal activation of the LTR, Tat mediates nuclear translocation of NF-kappa-B by interacting with host RELA. Through its interaction with host TBP, Tat may also modulate transcription initiation. Tat can reactivate a latently infected cell by penetrating in it and transactivating its LTR promoter. In the cytoplasm, Tat is thought to act as a translational activator of HIV-1 mRNAs. Functionally, extracellular circulating Tat can be endocytosed by surrounding uninfected cells via the binding to several surface receptors such as CD26, CXCR4, heparan sulfate proteoglycans (HSPG) or LDLR. Neurons are rarely infected, but they internalize Tat via their LDLR. Through its interaction with nuclear HATs, Tat is potentially able to control the acetylation-dependent cellular gene expression. Modulates the expression of many cellular genes involved in cell survival, proliferation or in coding for cytokines or cytokine receptors. Tat plays a role in T-cell and neurons apoptosis. Tat induced neurotoxicity and apoptosis probably contribute to neuroAIDS. Circulating Tat also acts as a chemokine-like and/or growth factor-like molecule that binds to specific receptors on the surface of the cells, affecting many cellular pathways. In the vascular system, Tat binds to ITGAV/ITGB3 and ITGA5/ITGB1 integrins dimers at the surface of endothelial cells and competes with bFGF for heparin-binding sites, leading to an excess of soluble bFGF. This Human immunodeficiency virus type 1 group M subtype B (isolate SF33) (HIV-1) protein is Protein Tat.